Reading from the N-terminus, the 66-residue chain is Large ribosomal subunit protein bL32 (66 aa).

Basic residues predominate over residues 1-19 (MAIVPKRKTSKQRKHKRNT). The interval 1–21 (MAIVPKRKTSKQRKHKRNTHS) is disordered.

The protein belongs to the bacterial ribosomal protein bL32 family.

The chain is Large ribosomal subunit protein bL32 from Mycoplasmopsis synoviae (strain 53) (Mycoplasma synoviae).